A 506-amino-acid chain; its full sequence is Sucrose transport protein SUT3 (506 aa).

At 1-20 (MAVDMELDGGGDGKGKAPPQ) the chain is on the cytoplasmic side. The helical transmembrane segment at 21 to 41 (ISLSGLFLACMVAGGVQYGWA) threads the bilayer. The Extracellular segment spans residues 42–54 (LQLSLLTPYVQTL). A helical membrane pass occupies residues 55 to 75 (GIPHALTSVMWLCGPIAGLIV). Residues 76–94 (QPCVGLYSDKCTSSLGRRR) lie on the Cytoplasmic side of the membrane. The chain crosses the membrane as a helical span at residues 95–115 (PFILTGCIIICISVIVIGFSS). Residues 116–135 (DIGYALGDTTEDCKVYRGPR) lie on the Extracellular side of the membrane. A helical transmembrane segment spans residues 136–156 (YHAAAAFILGFWLLDFSNNTV). Residues 157–171 (QGPARALMADLSGRH) are Cytoplasmic-facing. Residues 172-192 (GPSAANAIFCSWMALGNILGY) traverse the membrane as a helical segment. Residues 193-220 (SSGSTNDWHKWFPFLMTRACCEACANLK) lie on the Extracellular side of the membrane. The helical transmembrane segment at 221–241 (AAFLVAVVFLGLSTAVTMVFA) threads the bilayer. Over 242 to 275 (REVALDPVAAAKRNEGEASGLLAVFKGMKNLPVG) the chain is Cytoplasmic. The chain crosses the membrane as a helical span at residues 276 to 296 (MPSVLIVTGLTWLSWFPFILF). At 297-327 (DTDWMGREIYHGRPDGSPAEVTAFQEGVRQG) the chain is on the extracellular side. A helical transmembrane segment spans residues 328–348 (AFGLLLNSIVLGISSFLIEPM). Residues 349 to 355 (CRRLGAR) are Cytoplasmic-facing. The chain crosses the membrane as a helical span at residues 356–376 (AVWVMSSAVVCVAMAAVSVLS). At 377–404 (AWSLGDFGGSVQDAARAPAEEGGVRASA) the chain is on the extracellular side. The chain crosses the membrane as a helical span at residues 405–425 (LALFVFLGLPFAVLCSVPFAV). Over 426-441 (TAQLAASRGGGQGLCT) the chain is Cytoplasmic. A helical membrane pass occupies residues 442-462 (GVLNISIVVPQMAIALGAGPW). The Extracellular segment spans residues 463 to 470 (DELFGEGN). A helical transmembrane segment spans residues 471–491 (IPAFAMASVFAAAAAAAGVVL). Residues 492 to 506 (LPKVSVRSVSMAGGH) lie on the Cytoplasmic side of the membrane.

Belongs to the glycoside-pentoside-hexuronide (GPH) cation symporter transporter (TC 2.A.2.4) family. Homodimer. As to expression, widely expressed. Highest expression in sink leaves and lowest in germinating seeds.

The protein localises to the cell membrane. It functions in the pathway glycan biosynthesis; sucrose metabolism. Its function is as follows. Responsible for the transport of sucrose into the cell, with the concomitant uptake of protons (symport system). May also transport other glucosides. The polypeptide is Sucrose transport protein SUT3 (SUT3) (Oryza sativa subsp. japonica (Rice)).